A 113-amino-acid chain; its full sequence is Putative glycerol transporter Lin0367 (113 aa).

The next 4 membrane-spanning stretches (helical) occupy residues 3-23, 30-50, 63-83, and 92-112; these read IGIA…IRMM, EWGA…VWTI, GTVW…ASLL, and VVNL…LSLF.

The protein localises to the membrane. In terms of biological role, could be involved in the glycerol uptake either via facilitated diffusion or active transport. The chain is Putative glycerol transporter Lin0367 from Listeria innocua serovar 6a (strain ATCC BAA-680 / CLIP 11262).